A 449-amino-acid chain; its full sequence is UDP-N-acetylmuramate--L-alanine ligase (449 aa).

121–127 contacts ATP; the sequence is GAHGKSS.

It belongs to the MurCDEF family.

The protein localises to the cytoplasm. It catalyses the reaction UDP-N-acetyl-alpha-D-muramate + L-alanine + ATP = UDP-N-acetyl-alpha-D-muramoyl-L-alanine + ADP + phosphate + H(+). It functions in the pathway cell wall biogenesis; peptidoglycan biosynthesis. Functionally, cell wall formation. This chain is UDP-N-acetylmuramate--L-alanine ligase, found in Helicobacter pylori (strain ATCC 700392 / 26695) (Campylobacter pylori).